The sequence spans 916 residues: MQRDGTRSARRMDEGDRRTGSAGRSGSRELGRGFSYYNKYLARLQQNLRDTKRFFRDIKLTYSGAPGGPDTEFSGAEGEFGQLHSITFPRQEEEYLKLTVRCRPCIFILGQNCSGRGRVANGLLGGQLLPILTHGDIECCKRRRIRFRHGKQTLVSLALPEQYELVHQLVAHQGKWDTIPEEDLDVPEDEEDPAHRLAELEVTLPHQLLQDVDIVVSPCRSSQAVSMTLEDYVDHVQSIVVYAVSEEMLSKQDEEELTEIKEKYKLPVFFIRTSSTKDRLIGGSEGVRSVLYEQLIELGYLQRGLCNCGAAGSGSTAPSMLVEQFEKIRQLSTFSRQVLQMHLVDAAIVLNMVHSRCLDLFINKAFDMHRDLQITPKRLEYTRQKENELYESLMRISDRKQEELKDMIVETLNSMREQLLEDAANMQFKDIVIPQNGEPVSAHEVKCCIFQIKELIISRLNQAVVNKLISSVDYLRESFVGTMERCLRSLEKSQQESSSHVTSNHLKQILNAAYHVEVTFNSGSTVTRMVWEQIVQIIQRITWVSPPTITPEWKRRVAQDAIETLSASKLAKSICSQFCKRLKSSHEAFAASLKQLEVGHSGRLEKTNDLWLRVRKDHAPRLARLSLESRSLQDVLLHGKPRIGRELGRGQYGVVYLCDSWGGHFPCALKSVVPPDEKHWNDLALEFHYMRSLPKHERLVDLHGSVIDYSYGGGSSIAVLLITERLHRDLYVGLKTGLSLETRLQIALDVVEGIRFLHNQGVVHRDIKLKNVLLDKKHRAKITDLGFCKPEAMMSGSIVGTPIHMAPELFSGKYDNSVDVYAFGILFWYICSGSVKLPEAFEKCASKDHLWNNVRKGARPERLTIFDEECWKLMEACWNGDPSQRPLMGIVQPMLQGIMDRLCHTQETGKALEDST.

Basic and acidic residues predominate over residues 1 to 19; it reads MQRDGTRSARRMDEGDRRT. Residues 1 to 27 are disordered; it reads MQRDGTRSARRMDEGDRRTGSAGRSGS. Residues 641–895 form the Protein kinase domain; it reads PRIGRELGRG…PLMGIVQPML (255 aa). Residues 647 to 655 and K670 contribute to the ATP site; that span reads LGRGQYGVV. Catalysis depends on D766, which acts as the Proton acceptor.

It belongs to the protein kinase superfamily. Ser/Thr protein kinase family.

It localises to the cytoplasm. The protein resides in the cell membrane. It is found in the apical cell membrane. The protein localises to the basolateral cell membrane. Its subcellular location is the cell junction. The enzyme catalyses L-seryl-[protein] + ATP = O-phospho-L-seryl-[protein] + ADP + H(+). It catalyses the reaction L-threonyl-[protein] + ATP = O-phospho-L-threonyl-[protein] + ADP + H(+). It carries out the reaction L-tyrosyl-[protein] + ATP = O-phospho-L-tyrosyl-[protein] + ADP + H(+). Functionally, may act as a positive regulator of ERK phosphorylation downstream of fibroblast growth factor-receptor activation. May induce both caspase-dependent apoptosis and caspase-independent cell death. May play a role in the embryonic development. The sequence is that of Dual serine/threonine and tyrosine protein kinase (dstyk) from Xenopus laevis (African clawed frog).